The following is a 512-amino-acid chain: Cytochrome P450 1A1 (512 aa).

Residues 29–40 (SRPRVPKGLKNP) form a mitochondrial targeting signal region. The O-linked (GlcNAc) serine glycan is linked to Ser67. Position 224 (Phe224) interacts with substrate. Heme is bound at residue Cys457.

The protein belongs to the cytochrome P450 family. As to quaternary structure, interacts with cytosolic chaperones HSP70 and HSP90; this interaction is required for initial targeting to mitochondria. Interacts (via mitochondrial targeting signal) with TOMM40 (via N-terminus); this interaction is required for translocation across the mitochondrial outer membrane. Requires heme as cofactor.

The protein resides in the endoplasmic reticulum membrane. Its subcellular location is the mitochondrion inner membrane. It localises to the microsome membrane. The protein localises to the cytoplasm. The catalysed reaction is an organic molecule + reduced [NADPH--hemoprotein reductase] + O2 = an alcohol + oxidized [NADPH--hemoprotein reductase] + H2O + H(+). It carries out the reaction estrone + reduced [NADPH--hemoprotein reductase] + O2 = 2-hydroxyestrone + oxidized [NADPH--hemoprotein reductase] + H2O + H(+). It catalyses the reaction estrone + reduced [NADPH--hemoprotein reductase] + O2 = 4-hydroxyestrone + oxidized [NADPH--hemoprotein reductase] + H2O + H(+). The enzyme catalyses estrone + reduced [NADPH--hemoprotein reductase] + O2 = 6alpha-hydroxyestrone + oxidized [NADPH--hemoprotein reductase] + H2O + H(+). The catalysed reaction is estrone + reduced [NADPH--hemoprotein reductase] + O2 = 15alpha-hydroxyestrone + oxidized [NADPH--hemoprotein reductase] + H2O + H(+). It carries out the reaction estrone + reduced [NADPH--hemoprotein reductase] + O2 = 16alpha-hydroxyestrone + oxidized [NADPH--hemoprotein reductase] + H2O + H(+). It catalyses the reaction 17beta-estradiol + reduced [NADPH--hemoprotein reductase] + O2 = 2-hydroxy-17beta-estradiol + oxidized [NADPH--hemoprotein reductase] + H2O + H(+). The enzyme catalyses 17beta-estradiol + reduced [NADPH--hemoprotein reductase] + O2 = 4-hydroxy-17beta-estradiol + oxidized [NADPH--hemoprotein reductase] + H2O + H(+). The catalysed reaction is 17beta-estradiol + reduced [NADPH--hemoprotein reductase] + O2 = 6alpha-hydroxy-17beta-estradiol + oxidized [NADPH--hemoprotein reductase] + H2O + H(+). It carries out the reaction 17beta-estradiol + reduced [NADPH--hemoprotein reductase] + O2 = 7alpha-hydroxy-17beta-estradiol + oxidized [NADPH--hemoprotein reductase] + H2O + H(+). It catalyses the reaction 17beta-estradiol + reduced [NADPH--hemoprotein reductase] + O2 = 15alpha-hydroxy-17beta-estradiol + oxidized [NADPH--hemoprotein reductase] + H2O + H(+). The enzyme catalyses (5Z,8Z,11Z)-eicosatrienoate + reduced [NADPH--hemoprotein reductase] + O2 = 19-hydroxy-(5Z,8Z,11Z)-eicosatrienoate + oxidized [NADPH--hemoprotein reductase] + H2O + H(+). The catalysed reaction is (5Z,8Z,11Z,14Z)-eicosatetraenoate + reduced [NADPH--hemoprotein reductase] + O2 = 16-hydroxy-(5Z,8Z,11Z,14Z)-eicosatetraenoate + oxidized [NADPH--hemoprotein reductase] + H2O + H(+). It carries out the reaction (5Z,8Z,11Z,14Z)-eicosatetraenoate + reduced [NADPH--hemoprotein reductase] + O2 = 17-hydroxy-(5Z,8Z,11Z,14Z)-eicosatetraenoate + oxidized [NADPH--hemoprotein reductase] + H2O + H(+). It catalyses the reaction (5Z,8Z,11Z,14Z)-eicosatetraenoate + reduced [NADPH--hemoprotein reductase] + O2 = 18-hydroxy-(5Z,8Z,11Z,14Z)-eicosatetraenoate + oxidized [NADPH--hemoprotein reductase] + H2O + H(+). The enzyme catalyses (5Z,8Z,11Z,14Z)-eicosatetraenoate + reduced [NADPH--hemoprotein reductase] + O2 = 19-hydroxy-(5Z,8Z,11Z,14Z)-eicosatetraenoate + oxidized [NADPH--hemoprotein reductase] + H2O + H(+). The catalysed reaction is (5Z,8Z,11Z,14Z,17Z)-eicosapentaenoate + reduced [NADPH--hemoprotein reductase] + O2 = 19-hydroxy-(5Z,8Z,11Z,14Z,17Z)-eicosapentaenoate + oxidized [NADPH--hemoprotein reductase] + H2O + H(+). It carries out the reaction (5Z,8Z,11Z,14Z)-eicosatetraenoate + reduced [NADPH--hemoprotein reductase] + O2 = (8R,9S)-epoxy-(5Z,11Z,14Z)-eicosatrienoate + oxidized [NADPH--hemoprotein reductase] + H2O + H(+). It catalyses the reaction (5Z,8Z,11Z,14Z)-eicosatetraenoate + reduced [NADPH--hemoprotein reductase] + O2 = (11R,12S)-epoxy-(5Z,8Z,14Z)-eicosatrienoate + oxidized [NADPH--hemoprotein reductase] + H2O + H(+). The enzyme catalyses (5Z,8Z,11Z,14Z)-eicosatetraenoate + reduced [NADPH--hemoprotein reductase] + O2 = (14S,15R)-epoxy-(5Z,8Z,11Z)-eicosatrienoate + oxidized [NADPH--hemoprotein reductase] + H2O + H(+). The catalysed reaction is (5Z,8Z,11Z,14Z)-eicosatetraenoate + reduced [NADPH--hemoprotein reductase] + O2 = (14R,15S)-epoxy-(5Z,8Z,11Z)-eicosatrienoate + oxidized [NADPH--hemoprotein reductase] + H2O + H(+). It carries out the reaction (5Z,8Z,11Z,14Z,17Z)-eicosapentaenoate + reduced [NADPH--hemoprotein reductase] + O2 = (17R,18S)-epoxy-(5Z,8Z,11Z,14Z)-eicosatetraenoate + oxidized [NADPH--hemoprotein reductase] + H2O + H(+). It catalyses the reaction (4Z,7Z,10Z,13Z,16Z,19Z)-docosahexaenoate + reduced [NADPH--hemoprotein reductase] + O2 = (19S,20R)-epoxy-(4Z,7Z,10Z,13Z,16Z)-docosapentaenoate + oxidized [NADPH--hemoprotein reductase] + H2O + H(+). The enzyme catalyses (4Z,7Z,10Z,13Z,16Z,19Z)-docosahexaenoate + reduced [NADPH--hemoprotein reductase] + O2 = (19R,20S)-epoxy-(4Z,7Z,10Z,13Z,16Z)-docosapentaenoate + oxidized [NADPH--hemoprotein reductase] + H2O + H(+). The catalysed reaction is all-trans-retinol + reduced [NADPH--hemoprotein reductase] + O2 = all-trans-retinal + oxidized [NADPH--hemoprotein reductase] + 2 H2O + H(+). It carries out the reaction all-trans-retinal + reduced [NADPH--hemoprotein reductase] + O2 = all-trans-retinoate + oxidized [NADPH--hemoprotein reductase] + H2O + 2 H(+). It catalyses the reaction (13S)-hydroperoxy-(9Z,11E)-octadecadienoate = 13-oxo-(9Z,11E)-octadecadienoate + H2O. The enzyme catalyses (12S)-hydroperoxy-(5Z,8Z,10E,14Z)-eicosatetraenoate = 12-oxo-(5Z,8Z,10E,14Z)-eicosatetraenoate + H2O. The catalysed reaction is (15S)-hydroperoxy-(5Z,8Z,11Z,13E)-eicosatetraenoate = 15-oxo-(5Z,8Z,11Z,13E)-eicosatetraenoate + H2O. It carries out the reaction (5S)-hydroperoxy-(6E,8Z,11Z,14Z)-eicosatetraenoate = 5-oxo-(6E,8Z,11Z,14Z)-eicosatetraenoate + H2O. The protein operates within steroid hormone biosynthesis. It participates in lipid metabolism; fatty acid metabolism. It functions in the pathway cofactor metabolism; retinol metabolism. Functionally, a cytochrome P450 monooxygenase involved in the metabolism of various endogenous substrates, including fatty acids, steroid hormones and vitamins. Mechanistically, uses molecular oxygen inserting one oxygen atom into a substrate, and reducing the second into a water molecule, with two electrons provided by NADPH via cytochrome P450 reductase (CPR; NADPH-ferrihemoprotein reductase). Catalyzes the hydroxylation of carbon-hydrogen bonds. Exhibits high catalytic activity for the formation of hydroxyestrogens from estrone (E1) and 17beta-estradiol (E2), namely 2-hydroxy E1 and E2, as well as D-ring hydroxylated E1 and E2 at the C15alpha and C16alpha positions. Displays different regioselectivities for polyunsaturated fatty acids (PUFA) hydroxylation. Catalyzes the epoxidation of double bonds of certain PUFA. Converts arachidonic acid toward epoxyeicosatrienoic acid (EET) regioisomers, 8,9-, 11,12-, and 14,15-EET, that function as lipid mediators in the vascular system. Displays an absolute stereoselectivity in the epoxidation of eicosapentaenoic acid (EPA) producing the 17(R),18(S) enantiomer. May play an important role in all-trans retinoic acid biosynthesis in extrahepatic tissues. Catalyzes two successive oxidative transformation of all-trans retinol to all-trans retinal and then to the active form all-trans retinoic acid. May also participate in eicosanoids metabolism by converting hydroperoxide species into oxo metabolites (lipoxygenase-like reaction, NADPH-independent). This Macaca mulatta (Rhesus macaque) protein is Cytochrome P450 1A1 (CYP1A1).